A 156-amino-acid polypeptide reads, in one-letter code: Protein Smg homolog (156 aa).

The protein belongs to the Smg family.

This chain is Protein Smg homolog, found in Halorhodospira halophila (strain DSM 244 / SL1) (Ectothiorhodospira halophila (strain DSM 244 / SL1)).